A 193-amino-acid polypeptide reads, in one-letter code: Cysteine and glycine-rich protein 2 (193 aa).

An LIM zinc-binding 1 domain is found at 10–61 (CGACGRTVYHAEEVQCDGRTFHRCCFLCMVCRKNLDSTTVAIHDEEIYCKSC). The Nuclear localization signal motif lies at 64-69 (KKYGPK). Lys-91 is covalently cross-linked (Glycyl lysine isopeptide (Lys-Gly) (interchain with G-Cter in SUMO2)). N6-acetyllysine occurs at positions 112 and 131. One can recognise an LIM zinc-binding 2 domain in the interval 119-170 (CSRCGDSVYAAEKIIGAGKPWHKNCFRCAKCGKSLESTTLTEKEGEIYCKGC). Residue Lys-137 is modified to N6-acetyllysine; alternate. The residue at position 137 (Lys-137) is an N6-succinyllysine; alternate. At Lys-161 the chain carries N6-acetyllysine.

As to quaternary structure, interacts with KAT14. The LIM domain 1 is necessary and sufficient for this interaction. Interacts with GLRX3. In terms of tissue distribution, highly expressed in the aorta; weakly found in the kidney, thymus, and intestine. Barely detectable in brain, testis, esophagus, lung, liver, aortic adventitia, vena cava, or uterus; not present in heart and skeletal muscle.

Its subcellular location is the nucleus. Drastically down-regulated in response to PDGF-BB or cell injury, that promote smooth muscle cell proliferation and dedifferentiation. Seems to play a role in the development of the embryonic vascular system. The chain is Cysteine and glycine-rich protein 2 (Csrp2) from Rattus norvegicus (Rat).